We begin with the raw amino-acid sequence, 122 residues long: Large ribosomal subunit protein uL14 (122 aa).

It belongs to the universal ribosomal protein uL14 family. Part of the 50S ribosomal subunit. Forms a cluster with proteins L3 and L19. In the 70S ribosome, L14 and L19 interact and together make contacts with the 16S rRNA in bridges B5 and B8.

In terms of biological role, binds to 23S rRNA. Forms part of two intersubunit bridges in the 70S ribosome. In Lactobacillus helveticus (strain DPC 4571), this protein is Large ribosomal subunit protein uL14.